We begin with the raw amino-acid sequence, 446 residues long: Tubulin alpha chain-like 3 (446 aa).

An MREC motif motif is present at residues 1–4 (MREC). Q11, E78, S147, G151, T152, T186, N213, and N235 together coordinate GTP. Position 78 (E78) interacts with Mg(2+). E261 is a catalytic residue.

This sequence belongs to the tubulin family. In terms of assembly, dimer of alpha and beta chains. A typical microtubule is a hollow water-filled tube with an outer diameter of 25 nm and an inner diameter of 15 nM. Alpha-beta heterodimers associate head-to-tail to form protofilaments running lengthwise along the microtubule wall with the beta-tubulin subunit facing the microtubule plus end conferring a structural polarity. Microtubules usually have 13 protofilaments but different protofilament numbers can be found in some organisms and specialized cells. Mg(2+) is required as a cofactor. Post-translationally, some glutamate residues at the C-terminus are polyglycylated, resulting in polyglycine chains on the gamma-carboxyl group. Glycylation is mainly limited to tubulin incorporated into axonemes (cilia and flagella) whereas glutamylation is prevalent in neuronal cells, centrioles, axonemes, and the mitotic spindle. Both modifications can coexist on the same protein on adjacent residues, and lowering polyglycylation levels increases polyglutamylation, and reciprocally. Cilia and flagella glycylation is required for their stability and maintenance. Flagella glycylation controls sperm motility. In terms of processing, some glutamate residues at the C-terminus are polyglutamylated, resulting in polyglutamate chains on the gamma-carboxyl group. Polyglutamylation plays a key role in microtubule severing by spastin (SPAST). SPAST preferentially recognizes and acts on microtubules decorated with short polyglutamate tails: severing activity by SPAST increases as the number of glutamates per tubulin rises from one to eight, but decreases beyond this glutamylation threshold. Glutamylation is also involved in cilia motility.

The protein localises to the cytoplasm. Its subcellular location is the cytoskeleton. The catalysed reaction is GTP + H2O = GDP + phosphate + H(+). In terms of biological role, tubulin is the major constituent of microtubules, a cylinder consisting of laterally associated linear protofilaments composed of alpha- and beta-tubulin heterodimers. Microtubules grow by the addition of GTP-tubulin dimers to the microtubule end, where a stabilizing cap forms. Below the cap, tubulin dimers are in GDP-bound state, owing to GTPase activity of alpha-tubulin. The sequence is that of Tubulin alpha chain-like 3 (Tubal3) from Mus musculus (Mouse).